A 306-amino-acid chain; its full sequence is MTGKHVTVLMGGWSSERSVSLSSGTACADILEAQGYNVVRVDVDDRIVSVLEELRPTTVFNALHGPFGEDGCIQGILEYLKIPYTHSGVMASALAMDKGRAKIIAASAGVSVAPSCVMSRFSLGAEHPMKPPYVIKPIREGSSFGVVIVGSDETMPLHDIMNNEWVYDDEIMVEKYVPGRELTCAVLGDEVLDVCEIVPKECFQFYDYDSKYKSGGSLHICPAKLSSNIYQNVQRMSLAAHQAIGCRGVSRSDFRFNEETGELIWLEINTQPGMTSTSLVPDIAKASGRTYGDIVKWIVEDASCMR.

The ATP-grasp domain occupies 102–300 (KIIAASAGVS…YGDIVKWIVE (199 aa)). Position 128–183 (128–183 (PMKPPYVIKPIREGSSFGVVIVGSDETMPLHDIMNNEWVYDDEIMVEKYVPGRELT)) interacts with ATP. Mg(2+) is bound by residues Asp253, Glu267, and Asn269.

The protein belongs to the D-alanine--D-alanine ligase family. Mg(2+) is required as a cofactor. It depends on Mn(2+) as a cofactor.

The protein resides in the cytoplasm. It catalyses the reaction 2 D-alanine + ATP = D-alanyl-D-alanine + ADP + phosphate + H(+). It functions in the pathway cell wall biogenesis; peptidoglycan biosynthesis. Its function is as follows. Cell wall formation. The protein is D-alanine--D-alanine ligase of Bartonella bacilliformis (strain ATCC 35685 / KC583 / Herrer 020/F12,63).